The chain runs to 481 residues: Aspartyl/glutamyl-tRNA(Asn/Gln) amidotransferase subunit B (481 aa).

The protein belongs to the GatB/GatE family. GatB subfamily. As to quaternary structure, heterotrimer of A, B and C subunits.

The catalysed reaction is L-glutamyl-tRNA(Gln) + L-glutamine + ATP + H2O = L-glutaminyl-tRNA(Gln) + L-glutamate + ADP + phosphate + H(+). It catalyses the reaction L-aspartyl-tRNA(Asn) + L-glutamine + ATP + H2O = L-asparaginyl-tRNA(Asn) + L-glutamate + ADP + phosphate + 2 H(+). Functionally, allows the formation of correctly charged Asn-tRNA(Asn) or Gln-tRNA(Gln) through the transamidation of misacylated Asp-tRNA(Asn) or Glu-tRNA(Gln) in organisms which lack either or both of asparaginyl-tRNA or glutaminyl-tRNA synthetases. The reaction takes place in the presence of glutamine and ATP through an activated phospho-Asp-tRNA(Asn) or phospho-Glu-tRNA(Gln). The sequence is that of Aspartyl/glutamyl-tRNA(Asn/Gln) amidotransferase subunit B from Ehrlichia chaffeensis (strain ATCC CRL-10679 / Arkansas).